Here is a 152-residue protein sequence, read N- to C-terminus: Deoxyuridine 5'-triphosphate nucleotidohydrolase (152 aa).

Substrate-binding positions include 71 to 73 (RSG), N84, 88 to 90 (LID), and M98.

The protein belongs to the dUTPase family. Requires Mg(2+) as cofactor.

The catalysed reaction is dUTP + H2O = dUMP + diphosphate + H(+). The protein operates within pyrimidine metabolism; dUMP biosynthesis; dUMP from dCTP (dUTP route): step 2/2. Its function is as follows. This enzyme is involved in nucleotide metabolism: it produces dUMP, the immediate precursor of thymidine nucleotides and it decreases the intracellular concentration of dUTP so that uracil cannot be incorporated into DNA. This Shewanella amazonensis (strain ATCC BAA-1098 / SB2B) protein is Deoxyuridine 5'-triphosphate nucleotidohydrolase.